The primary structure comprises 272 residues: MRPSELTQLKQDGRAISILTAWDGISAALVEAAGADVVLVGDSLAMVALCHATTLPVTVEQMLHHTKAVGRGFTRPLPQQPLVVCDLPFLSYQCGEDKAVAAAGSLLKHSCAAAVKLEGAEPEVLAVIERLVRMGIPVMGHLGLTPQAVHQLGYRRQAEDPRSQAQMLQQAKQLEQAGCFALVVEHVPSSIARCLSQQLTIPVIGIGAGEDCDGQVRVTADLLGLTPSQPPFSQPLIQGRQLCVEALQGWVKQLHQQAKTATTTTSPPEPDC.

The Mg(2+) site is built by Asp-42 and Asp-86. 3-methyl-2-oxobutanoate contacts are provided by residues 42 to 43, Asp-86, and Lys-116; that span reads DS. Residue Glu-118 participates in Mg(2+) binding. Glu-185 (proton acceptor) is an active-site residue.

This sequence belongs to the PanB family. Homodecamer; pentamer of dimers. It depends on Mg(2+) as a cofactor.

It localises to the cytoplasm. The enzyme catalyses 3-methyl-2-oxobutanoate + (6R)-5,10-methylene-5,6,7,8-tetrahydrofolate + H2O = 2-dehydropantoate + (6S)-5,6,7,8-tetrahydrofolate. It participates in cofactor biosynthesis; (R)-pantothenate biosynthesis; (R)-pantoate from 3-methyl-2-oxobutanoate: step 1/2. Its function is as follows. Catalyzes the reversible reaction in which hydroxymethyl group from 5,10-methylenetetrahydrofolate is transferred onto alpha-ketoisovalerate to form ketopantoate. This Prochlorococcus marinus (strain MIT 9313) protein is 3-methyl-2-oxobutanoate hydroxymethyltransferase.